The sequence spans 259 residues: Ribosomal RNA small subunit methyltransferase A (259 aa).

S-adenosyl-L-methionine is bound by residues Asn-12, Leu-14, Gly-39, Glu-60, Asp-84, and Asn-102.

The protein belongs to the class I-like SAM-binding methyltransferase superfamily. rRNA adenine N(6)-methyltransferase family. RsmA subfamily.

Its subcellular location is the cytoplasm. The catalysed reaction is adenosine(1518)/adenosine(1519) in 16S rRNA + 4 S-adenosyl-L-methionine = N(6)-dimethyladenosine(1518)/N(6)-dimethyladenosine(1519) in 16S rRNA + 4 S-adenosyl-L-homocysteine + 4 H(+). Its function is as follows. Specifically dimethylates two adjacent adenosines (A1518 and A1519) in the loop of a conserved hairpin near the 3'-end of 16S rRNA in the 30S particle. May play a critical role in biogenesis of 30S subunits. This chain is Ribosomal RNA small subunit methyltransferase A, found in Nitrosospira multiformis (strain ATCC 25196 / NCIMB 11849 / C 71).